The sequence spans 348 residues: Phospho-N-acetylmuramoyl-pentapeptide-transferase (348 aa).

10 helical membrane passes run 11 to 31 (SWML…IFLG), 68 to 88 (AGGI…LPLG), 92 to 112 (TWLF…DDII), 128 to 148 (FVIQ…IYKG), 165 to 185 (VGHS…TIVG), 196 to 216 (LDGL…VVAL), 222 to 242 (PLAQ…FAFL), 251 to 271 (VFMG…CAVM), 276 to 296 (LLLI…ILQV), and 326 to 346 (VVAR…IAAL).

It belongs to the glycosyltransferase 4 family. MraY subfamily. Mg(2+) is required as a cofactor.

It is found in the cell inner membrane. The enzyme catalyses UDP-N-acetyl-alpha-D-muramoyl-L-alanyl-gamma-D-glutamyl-meso-2,6-diaminopimeloyl-D-alanyl-D-alanine + di-trans,octa-cis-undecaprenyl phosphate = di-trans,octa-cis-undecaprenyl diphospho-N-acetyl-alpha-D-muramoyl-L-alanyl-D-glutamyl-meso-2,6-diaminopimeloyl-D-alanyl-D-alanine + UMP. It participates in cell wall biogenesis; peptidoglycan biosynthesis. Its function is as follows. Catalyzes the initial step of the lipid cycle reactions in the biosynthesis of the cell wall peptidoglycan: transfers peptidoglycan precursor phospho-MurNAc-pentapeptide from UDP-MurNAc-pentapeptide onto the lipid carrier undecaprenyl phosphate, yielding undecaprenyl-pyrophosphoryl-MurNAc-pentapeptide, known as lipid I. This chain is Phospho-N-acetylmuramoyl-pentapeptide-transferase, found in Chlamydia caviae (strain ATCC VR-813 / DSM 19441 / 03DC25 / GPIC) (Chlamydophila caviae).